We begin with the raw amino-acid sequence, 976 residues long: Peptidylglycine alpha-amidating monooxygenase (976 aa).

An N-terminal signal peptide occupies residues 1-25 (MAGRARSGLLLLLLGLLALQSSCLA). A peptidylglycine alpha-hydroxylating monooxygenase region spans residues 1–497 (MAGRARSGLL…EGPWEPEPSG (497 aa)). A propeptide spanning residues 26–35 (FRSPLSVFKR) is cleaved from the precursor. The Intragranular portion of the chain corresponds to 36–866 (FKETTRSFSN…QKLSTEPGSG (831 aa)). 5 disulfides stabilise this stretch: C47–C186, C81–C126, C114–C131, C227–C334, and C293–C315. 2 residues coordinate Cu(2+): H107 and H108. Positions 172, 242, 244, and 314 each coordinate Cu(2+). The segment at 498–820 (DFHVEEELDW…LTEKMEHRSV (323 aa)) is peptidyl-alpha-hydroxyglycine alpha-amidating lyase. NHL repeat units lie at residues 501–544 (VEEE…NSFD), 570–611 (AEIL…LDPH), 620–665 (LGRS…FSPS), and 673–717 (GEES…FKTD). V520 is a binding site for Ca(2+). Residue R533 coordinates a protein. H585 lines the Zn(2+) pocket. A Ca(2+)-binding site is contributed by L587. C634 and C655 form a disulfide bridge. Y654 serves as a coordination point for a protein. H690 contributes to the Zn(2+) binding site. Cysteines 702 and 713 form a disulfide. R706 is a binding site for a protein. N-linked (GlcNAc...) asparagine glycosylation is present at N765. The stretch at 769 to 812 (GEIIDVFKPVRKHFDMPHDIVASEDGTVYIGDAHTNTVWKFTLT) is one NHL 5 repeat. V774 is modified (sulfotyrosine). H786 serves as a coordination point for Zn(2+). D787 serves as a coordination point for Ca(2+). A Sulfotyrosine modification is found at E792. The helical transmembrane segment at 867–890 (VSVVLITTLLVIPVLVLLAIVMFI) threads the bilayer. Topologically, residues 891 to 976 (RWKKSRAFGD…APLPKPAPSS (86 aa)) are cytoplasmic. Phosphoserine occurs at positions 921, 932, and 945. The interaction with RASSF9 stretch occupies residues 928–945 (NFFASRKGYSRKGFDRVS). The disordered stretch occupies residues 940-976 (GFDRVSTEGSDQEKDEDDGTESEEEYSAPLPKPAPSS). T946 is subject to Phosphothreonine. A Phosphoserine modification is found at S949. Acidic residues predominate over residues 952-965 (EKDEDDGTESEEEY). T959 is subject to Phosphothreonine. S961 is subject to Phosphoserine.

It in the C-terminal section; belongs to the peptidyl-alpha-hydroxyglycine alpha-amidating lyase family. In the N-terminal section; belongs to the copper type II ascorbate-dependent monooxygenase family. Monomer. Interacts with RASSF9. Zn(2+) serves as cofactor. It depends on Cu(2+) as a cofactor.

The protein resides in the cytoplasmic vesicle. The protein localises to the secretory vesicle membrane. Its subcellular location is the membrane. It localises to the secreted. It catalyses the reaction a [peptide]-C-terminal glycine + 2 L-ascorbate + O2 = a [peptide]-C-terminal (2S)-2-hydroxyglycine + 2 monodehydro-L-ascorbate radical + H2O. It carries out the reaction a [peptide]-C-terminal (2S)-2-hydroxyglycine = a [peptide]-C-terminal amide + glyoxylate. The enzyme catalyses N-dodecanoylglycine + 2 L-ascorbate + O2 = N-dodecanoyl-(2S)-hydroxyglycine + 2 monodehydro-L-ascorbate radical + H2O. The catalysed reaction is N-dodecanoyl-(2S)-hydroxyglycine = dodecanamide + glyoxylate. It catalyses the reaction N-(9Z,12Z,15Z)-octadecatrienoylglycine + 2 L-ascorbate + O2 = N-(9Z,12Z,15Z)-octadecatrienoyl-(2S)-hydroxyglycine + 2 monodehydro-L-ascorbate radical + H2O. It carries out the reaction N-(9Z,12Z,15Z)-octadecatrienoyl-(2S)-hydroxyglycine = (9Z,12Z,15Z)-octadecatrienamide + glyoxylate. The enzyme catalyses N-(9Z-octadecenoyl)glycine + 2 L-ascorbate + O2 = N-(9Z-octadecenoyl)-(2S)-hydroxyglycine + 2 monodehydro-L-ascorbate radical + H2O. The catalysed reaction is N-(9Z-octadecenoyl)-(2S)-hydroxyglycine = (9Z)-octadecenamide + glyoxylate. It catalyses the reaction N-tetradecanoylglycine + 2 L-ascorbate + O2 = N-tetradecanoyl-(2S)-hydroxyglycine + 2 monodehydro-L-ascorbate radical + H2O. It carries out the reaction N-tetradecanoyl-(2S)-hydroxyglycine = tetradecamide + glyoxylate. The enzyme catalyses N-decanoylglycine + 2 L-ascorbate + O2 = N-decanoyl-(2S)-hydroxyglycine + 2 monodehydro-L-ascorbate radical + H2O. The catalysed reaction is N-decanoyl-(2S)-hydroxyglycine = decanamide + glyoxylate. It catalyses the reaction N-octanoylglycine + 2 L-ascorbate + O2 = N-octanoyl-(2S)-hydroxyglycine + 2 monodehydro-L-ascorbate radical + H2O. It carries out the reaction N-octanoyl-(2S)-hydroxyglycine = octanamide + glyoxylate. With respect to regulation, PAM activity is inhibited by EDTA, phenylglyoxal and diethyl pyrocarbonate. PAL activity is stimulated by cadmium and inhibited by mercury. Bifunctional enzyme that catalyzes amidation of the C-terminus of proteins. Alpha-amidation is present at the C-terminus of many endocrine hormones and neuropeptides and is required for their activity. C-terminal amidation also takes place in response to protein fragmentation triggered by oxidative stress, promoting degradation of amidated protein fragments by the proteasome. Alpha-amidation involves two sequential reactions, both of which are catalyzed by separate catalytic domains of the enzyme. The first step, catalyzed by peptidyl alpha-hydroxylating monooxygenase (PHM) domain, is the copper-, ascorbate-, and O2- dependent stereospecific hydroxylation (with S stereochemistry) at the alpha-carbon (C-alpha) of the C-terminal glycine of the peptidylglycine substrate. The second step, catalyzed by the peptidylglycine amidoglycolate lyase (PAL) domain, is the zinc-dependent cleavage of the N-C-alpha bond, producing the alpha-amidated peptide and glyoxylate. Similarly, catalyzes the two-step conversion of an N-fatty acylglycine to a primary fatty acid amide and glyoxylate. This Rattus norvegicus (Rat) protein is Peptidylglycine alpha-amidating monooxygenase.